A 1364-amino-acid chain; its full sequence is DNA-directed RNA polymerase subunit beta' (1364 aa).

The disordered stretch occupies residues 1–42 (MTSSSSKSNKSRKSSKAAKDTTPVHESASRPLSKTPPPFRNH). 4 residues coordinate Zn(2+): cysteine 250, cysteine 317, cysteine 324, and cysteine 327.

This sequence belongs to the RNA polymerase beta' chain family. RpoC2 subfamily. In terms of assembly, in cyanobacteria the RNAP catalytic core is composed of 2 alpha, 1 beta, 1 beta', 1 gamma and 1 omega subunit. When a sigma factor is associated with the core the holoenzyme is formed, which can initiate transcription. Requires Zn(2+) as cofactor.

It carries out the reaction RNA(n) + a ribonucleoside 5'-triphosphate = RNA(n+1) + diphosphate. DNA-dependent RNA polymerase catalyzes the transcription of DNA into RNA using the four ribonucleoside triphosphates as substrates. The polypeptide is DNA-directed RNA polymerase subunit beta' (Parasynechococcus marenigrum (strain WH8102)).